The sequence spans 108 residues: UPF0060 membrane protein RSKD131_0092 (108 aa).

A run of 4 helical transmembrane segments spans residues 5–25 (LAAY…VWAW), 32–52 (ALWL…LALT), 62–82 (AVYG…VEGV), and 86–106 (RWDM…LWAP).

This sequence belongs to the UPF0060 family.

It localises to the cell inner membrane. In Cereibacter sphaeroides (strain KD131 / KCTC 12085) (Rhodobacter sphaeroides), this protein is UPF0060 membrane protein RSKD131_0092.